The sequence spans 457 residues: SSSAPLLFPLVSCDSSLPDETQVTLGCLARDFLPRPVTFSWKFKNSSSISSQNIYNFPEVFTGGKYMATSQVLLPSTAILQSTDDYITCHTKHTTGEKEKKVELQVTPELPPNVSIFVPPRNSFSGNHPRTSQLICQASGFSPRTIVMSWLQRGEPVQPSLVSTSAVEAEPKGSGPTTFRVISRLTITENEWLSQREFTCQALHKGLTFQKNVSSVCMGDDTSTGISVFLLPPTFANIFLTQSAQLTCLVTGLATYDSLDISWSRQNGEALQTHVNISESHPNSTFTAKGHASVCREEWESGEKFTCTVQHSDLPSPLKQSLSRPKDVANDPPSVFVLPPAQEQLKLRESASITCLVKDFSPPDVFVQWQHHGQPVDPKHYVTSNPTPEPQNPGLYFVHSILTVSEKDWSSGESFSCVVGHEALPLSVTEKAVDKTSGKPTLYNVSLVLSDTASTCY.

Positions 1-105 (SSSAPLLFPL…GEKEKKVELQ (105 aa)) are CH1. A disulfide bridge links cysteine 27 with cysteine 89. Residues asparagine 45 and asparagine 113 are each glycosylated (N-linked (GlcNAc...) asparagine). The interval 106 to 220 (VTPELPPNVS…KNVSSVCMGD (115 aa)) is CH2. Cysteine 136 and cysteine 200 form a disulfide bridge. N-linked (GlcNAc...) asparagine glycans are attached at residues asparagine 212, asparagine 276, and asparagine 283. Residues 221 to 326 (DTSTGISVFL…PLKQSLSRPK (106 aa)) are CH3. 2 disulfide bridges follow: cysteine 248/cysteine 307 and cysteine 355/cysteine 417. The segment at 327–457 (DVANDPPSVF…VLSDTASTCY (131 aa)) is CH4. Residue asparagine 444 is glycosylated (N-linked (GlcNAc...) asparagine).

In Suncus murinus (Asian house shrew), this protein is Ig mu chain C region.